We begin with the raw amino-acid sequence, 811 residues long: Mitochondrial intermediate peptidase (811 aa).

Residues Met1–Ser25 constitute a mitochondrion transit peptide. Residues Thr423–Thr450 are disordered. Positions Thr431–Thr450 are enriched in low complexity. His593 is a Zn(2+) binding site. Residue Glu594 is part of the active site. Zn(2+) is bound by residues His597 and His600.

The protein belongs to the peptidase M3 family. Zn(2+) serves as cofactor.

Its subcellular location is the mitochondrion matrix. It carries out the reaction Release of an N-terminal octapeptide as second stage of processing of some proteins imported into the mitochondrion.. Functionally, cleaves proteins, imported into the mitochondrion, to their mature size. While most mitochondrial precursor proteins are processed to the mature form in one step by mitochondrial processing peptidase (MPP), the sequential cleavage by MIP of an octapeptide after initial processing by MPP is a required step for a subgroup of nuclear-encoded precursor proteins destined for the matrix or the inner membrane. The sequence is that of Mitochondrial intermediate peptidase (OCT1) from Lodderomyces elongisporus (strain ATCC 11503 / CBS 2605 / JCM 1781 / NBRC 1676 / NRRL YB-4239) (Yeast).